The chain runs to 443 residues: Threonine/serine transporter TdcC (443 aa).

11 consecutive transmembrane segments (helical) span residues 22–42 (TTWT…FFPI), 44–64 (AGFG…PIAF), 97–117 (GVVI…IYGV), 140–160 (FVAL…KDLM), 163–183 (VMSY…LSLI), 207–227 (ILVT…FSPI), 259–279 (ASML…FTLS), 319–339 (ASII…LGTL), 366–386 (ISMI…PNIL), 389–409 (IEAM…MYAI), and 423–443 (DNVF…YKLF).

The protein belongs to the amino acid/polyamine transporter 2 family. SdaC/TdcC subfamily.

It is found in the cell inner membrane. The catalysed reaction is L-threonine(in) + H(+)(in) = L-threonine(out) + H(+)(out). It carries out the reaction L-serine(in) + H(+)(in) = L-serine(out) + H(+)(out). Involved in the import of threonine and serine into the cell, with the concomitant import of a proton (symport system). This is Threonine/serine transporter TdcC from Salmonella paratyphi A (strain ATCC 9150 / SARB42).